A 434-amino-acid polypeptide reads, in one-letter code: N-acylneuraminate cytidylyltransferase (434 aa).

Met-1 carries the post-translational modification N-acetylmethionine. Residues 1–42 (MDSVEKGAATSVSNPRGRPSRGRPPKLQRNSRGGQGRGVEKP) are disordered. The short motif at 15 to 31 (PRGRPSRGRPPKLQRNS) is the BC1 motif element. An omega-N-methylarginine mark is found at Arg-37 and Arg-52. Substrate contacts are provided by Arg-52, Asn-62, Arg-111, Ser-120, Ser-122, and Gln-143. The BC2 motif signature appears at 200–206 (KRPRRQD). Residue Arg-201 is part of the active site. Positions 269–276 (KEKLKEIK) match the BC3 motif motif.

Belongs to the CMP-NeuNAc synthase family. Homotetramer; the active enzyme is formed by a dimer of dimers. In terms of tissue distribution, ubiquitously expressed. Expressed in pancreas, kidney, liver, skeletal muscle, lung, placenta, brain, heart, colon, PBL, small intestine, ovary, testis, prostate, thymus and spleen.

The protein localises to the nucleus. The catalysed reaction is an N-acylneuraminate + CTP = a CMP-N-acyl-beta-neuraminate + diphosphate. Its pathway is amino-sugar metabolism; N-acetylneuraminate metabolism. Functionally, catalyzes the activation of N-acetylneuraminic acid (NeuNAc) to cytidine 5'-monophosphate N-acetylneuraminic acid (CMP-NeuNAc), a substrate required for the addition of sialic acid. Has some activity toward NeuNAc, N-glycolylneuraminic acid (Neu5Gc) or 2-keto-3-deoxy-D-glycero-D-galacto-nononic acid (KDN). The protein is N-acylneuraminate cytidylyltransferase (CMAS) of Homo sapiens (Human).